Reading from the N-terminus, the 583-residue chain is Protein NRT1/ PTR FAMILY 5.1 (583 aa).

Residues 74–94 (WSGAVWITPIAGAYIADSYIG) form a helical membrane-spanning segment. A Phosphothreonine modification is found at Thr-98. 10 helical membrane-spanning segments follow: residues 99-119 (FTASSLIYVLGMILLTMAVTV), 134-154 (ASSLQVTFFYISLYTIAIGAG), 182-202 (FFNWWMFSSFLGALFATLGLV), 210-230 (WGLGYGIPTVGLLVSLVVFYI), 320-340 (VLGLIFIWLVTLIPSTLWAQV), 361-381 (IPAASLGSFVTLSMLLSVPMY), 405-425 (LGVGFAIQIVAIAIASAVEVK), 446-466 (IFWLLPQYSLLGIGDVFNAIG), 485-505 (TFFTSGIGLGNFLNSFLVTMI), and 529-549 (YYYGFLVVISIVNMGLFVWAA).

Belongs to the major facilitator superfamily. Proton-dependent oligopeptide transporter (POT/PTR) (TC 2.A.17) family. As to expression, expressed in flowers. Detected in stems, leaves and siliques.

The protein localises to the membrane. The chain is Protein NRT1/ PTR FAMILY 5.1 (NPF5.1) from Arabidopsis thaliana (Mouse-ear cress).